The chain runs to 489 residues: MQESKEPQNKFEGCQRISSSSSTLFGGTSFEEPRCGTSQGKEEDAFACNNGDHCSSITNVQEDDFVLPELLPSFEMYENLLSNIPQSSFDTYFPENPPFYEVASRNQSIPSEGESGNDMRILTGDIVGPDNHEVTVDGRRFASGPAESQIRNYDDTKGIPVENIYALPRIKTPIATELYVTKTAPKFGQLPKHESMLREYTSGDIIHGYFTVENKSTKPIKFDMFYLTLEGTTSSKTQSPFGIQKTTERILRMVDMAASWSYNHEDVNTGEDLCGFFDSIDKTSFGLPNSRILNPGDKRKKFFTFKIPNQLLDVTCKHGHFSHSLLPPTLGFDRPSSSHPELSTLKFSESLGYGRLSERGSSLWLNDSSSGSLINYSINAMIVGKDVASGRVCLMSEKKYSIRIVPFGFQNNPISREKCLKDLEDFDIEIANRLGMIEKVFSKIERAIPIHKEDIQEANRSDQLSPLRGKYEWNAVAGNTENGTLKKKH.

The disordered stretch occupies residues 1-42 (MQESKEPQNKFEGCQRISSSSSTLFGGTSFEEPRCGTSQGKE). A compositionally biased stretch (low complexity) spans 18–30 (SSSSSTLFGGTSF). Residues Ser111 and Ser350 each carry the phosphoserine modification.

Belongs to the BUL1 family.

Functionally, appears to play a role in translation fidelity, and may act when translation is compromised. May be a component of the ubiquitination pathway. This chain is Bypass of stop codon protein 5 (BSC5), found in Saccharomyces cerevisiae (strain ATCC 204508 / S288c) (Baker's yeast).